A 350-amino-acid chain; its full sequence is Derriere protein (350 aa).

The N-terminal stretch at 1-16 is a signal peptide; sequence MLSLACFFSFLLMVKS. A propeptide spanning residues 17 to 236 is cleaved from the precursor; that stretch reads SPLTFQERML…SSCKTPRAKR (220 aa). Asn-171 and Asn-202 each carry an N-linked (GlcNAc...) asparagine glycan. Cystine bridges form between Cys-249–Cys-315, Cys-278–Cys-347, and Cys-282–Cys-349.

Belongs to the TGF-beta family. As to quaternary structure, homodimer; disulfide-linked. Also forms heterodimers with other TGF-beta family members including nodal2/nr-2 and bmp4.

The protein resides in the secreted. Its function is as follows. Required for posterior mesoderm formation during embryogenesis. Acts indirectly to suppress head formation by altering mesodermal patterning. Also involved in the establishment of left-right axis asymmetry, acting upstream of nodal/nr-1. Can exert long-range effects in the embryo. This Xenopus tropicalis (Western clawed frog) protein is Derriere protein.